Reading from the N-terminus, the 475-residue chain is 3-hydroxyadipyl-CoA dehydrogenase (475 aa).

Belongs to the 3-hydroxyacyl-CoA dehydrogenase family. Homotrimer.

It carries out the reaction (3S)-3-hydroxyadipyl-CoA + NAD(+) = 3-oxoadipyl-CoA + NADH + H(+). It participates in aromatic compound metabolism; phenylacetate degradation. Functionally, catalyzes the oxidation of 3-hydroxyadipyl-CoA to yield 3-oxoadipyl-CoA. In Escherichia coli (strain K12), this protein is 3-hydroxyadipyl-CoA dehydrogenase (paaH).